We begin with the raw amino-acid sequence, 485 residues long: Adenosylhomocysteinase 1 (485 aa).

Substrate contacts are provided by Thr-64, Asp-139, and Glu-205. 206 to 208 lines the NAD(+) pocket; the sequence is TTT. Substrate-binding residues include Lys-235 and Asp-239. NAD(+)-binding positions include 271-276, Glu-292, 348-350, Asn-397, His-404, Lys-479, 479-483, and Tyr-483; these read GDVGKG, IGH, and KPPHY.

Belongs to the adenosylhomocysteinase family. Homotetramer. Requires NAD(+) as cofactor.

It catalyses the reaction S-adenosyl-L-homocysteine + H2O = L-homocysteine + adenosine. Its pathway is amino-acid biosynthesis; L-homocysteine biosynthesis; L-homocysteine from S-adenosyl-L-homocysteine: step 1/1. Functionally, essential protein during embryogenesis. Adenosylhomocysteine is a competitive inhibitor of S-adenosyl-L-methionine-dependent methyl transferase reactions; therefore adenosylhomocysteinase may play a key role in the control of methylations via regulation of the intracellular concentration of adenosylhomocysteine. Required for DNA methylation-dependent gene silencing. The chain is Adenosylhomocysteinase 1 from Arabidopsis thaliana (Mouse-ear cress).